A 240-amino-acid polypeptide reads, in one-letter code: Biosynthetic peptidoglycan transglycosylase (240 aa).

Residues 15–35 (WMVYLGAVVAIAWLATQAFYF) traverse the membrane as a helical segment.

This sequence belongs to the glycosyltransferase 51 family.

It localises to the cell inner membrane. It carries out the reaction [GlcNAc-(1-&gt;4)-Mur2Ac(oyl-L-Ala-gamma-D-Glu-L-Lys-D-Ala-D-Ala)](n)-di-trans,octa-cis-undecaprenyl diphosphate + beta-D-GlcNAc-(1-&gt;4)-Mur2Ac(oyl-L-Ala-gamma-D-Glu-L-Lys-D-Ala-D-Ala)-di-trans,octa-cis-undecaprenyl diphosphate = [GlcNAc-(1-&gt;4)-Mur2Ac(oyl-L-Ala-gamma-D-Glu-L-Lys-D-Ala-D-Ala)](n+1)-di-trans,octa-cis-undecaprenyl diphosphate + di-trans,octa-cis-undecaprenyl diphosphate + H(+). It functions in the pathway cell wall biogenesis; peptidoglycan biosynthesis. Functionally, peptidoglycan polymerase that catalyzes glycan chain elongation from lipid-linked precursors. This chain is Biosynthetic peptidoglycan transglycosylase, found in Paraburkholderia phytofirmans (strain DSM 17436 / LMG 22146 / PsJN) (Burkholderia phytofirmans).